A 145-amino-acid chain; its full sequence is Transcription factor MEE8 (145 aa).

Residues 33–49 (EKGVEKVGQKRSAESRR) are compositionally biased toward basic and acidic residues. The interval 33 to 61 (EKGVEKVGQKRSAESRREGKKKRVKTQCV) is disordered. The region spanning 66–115 (DKSDHDTLLKKKRRERIRRQLETLKEITPNCPQSDINAILDCVIEYTNNL) is the bHLH domain.

Homodimer.

Its subcellular location is the nucleus. In terms of biological role, required during early embryo development, for the endosperm formation. In Arabidopsis thaliana (Mouse-ear cress), this protein is Transcription factor MEE8 (MEE8).